A 130-amino-acid chain; its full sequence is Large ribosomal subunit protein bL12 (130 aa).

This sequence belongs to the bacterial ribosomal protein bL12 family. Homodimer. Part of the ribosomal stalk of the 50S ribosomal subunit. Forms a multimeric L10(L12)X complex, where L10 forms an elongated spine to which 2 to 4 L12 dimers bind in a sequential fashion. Binds GTP-bound translation factors.

In terms of biological role, forms part of the ribosomal stalk which helps the ribosome interact with GTP-bound translation factors. Is thus essential for accurate translation. This is Large ribosomal subunit protein bL12 from Synechococcus sp. (strain RCC307).